A 950-amino-acid chain; its full sequence is Protocadherin alpha-6 (950 aa).

The signal sequence occupies residues Met1–Gly29. Topologically, residues Gln30–Asn697 are extracellular. Cadherin domains follow at residues Ser34–Phe133, Ala157–Phe242, Glu243–Ile350, Ala351–Phe455, Ala456–Leu565, and Val581–Ala678. Residues Asn257, Asn265, Asn386, and Asn548 are each glycosylated (N-linked (GlcNAc...) asparagine). A helical transmembrane segment spans residues Val698–Tyr718. The Cytoplasmic portion of the chain corresponds to Thr719 to Gln950. PXXP repeat units follow at residues Pro799 to Pro802, Pro832 to Pro835, Pro873 to Pro876, and Pro891 to Pro894. Residues Pro799–Pro894 are 4 X 4 AA repeats of P-X-X-P. The tract at residues Ala830–Gln950 is disordered. Residues Asp909–Lys923 show a composition bias toward basic and acidic residues.

It is found in the cell membrane. It localises to the secreted. Its function is as follows. Potential calcium-dependent cell-adhesion protein. May be involved in the establishment and maintenance of specific neuronal connections in the brain. In Homo sapiens (Human), this protein is Protocadherin alpha-6 (PCDHA6).